The chain runs to 166 residues: Regulatory protein RecX (166 aa).

The protein belongs to the RecX family.

The protein resides in the cytoplasm. Modulates RecA activity. In Escherichia coli O7:K1 (strain IAI39 / ExPEC), this protein is Regulatory protein RecX.